A 1340-amino-acid chain; its full sequence is WASH complex subunit 2 (1340 aa).

Residues 1–219 are sufficient for interaction with WASHC3, WASHC4 and WASHC5; required for interaction with WASHC1; sequence MNRTTPDQEL…VGSDRGSIVD (219 aa). 5 positions are modified to phosphoserine: Ser157, Ser159, Ser204, Ser205, and Ser209. Residues 201–213 are compositionally biased toward low complexity; the sequence is GELSSEEGSVGSD. Residues 201–404 form a disordered region; sequence GELSSEEGSV…SSSKPGKKIP (204 aa). Residues 219–231 show a composition bias toward acidic residues; it reads DTEEEKEEEESDE. Residues 232–241 are compositionally biased toward basic and acidic residues; it reads DFAHHSDNDQ. Composition is skewed to acidic residues over residues 249 to 258 and 265 to 275; these read SDEEEDDDGC and EKEEEDIEDIE. Ser287 is modified (phosphoserine). Over residues 292-306 the composition is skewed to basic and acidic residues; the sequence is LAARIKGDAVGRVDE. Phosphothreonine is present on Thr330. Over residues 354–365 the composition is skewed to gly residues; sequence GSGGGLFSGGKG. Residues 355 to 599 form a sufficient for interaction with CCDC93 region; that stretch reads SGGGLFSGGK…QTLSLQAQGE (245 aa). An interaction with VPS35 region spans residues 356–1340; the sequence is GGGLFSGGKG…DDPLNAFGGQ (985 aa). Positions 366–377 match the LFa 1 motif; the sequence is LFDDEDEESDLF. A phosphoserine mark is found at Ser394 and Ser396. Short sequence motifs (LFa) lie at residues 410–418, 449–462, and 481–490; these read VFLGDTDVF, LFDDDDGDDDDDFF, and IFGDDEGDLF. 3 disordered regions span residues 421-586, 618-663, and 695-838; these read ASVP…GGTA, SSDE…KASL, and DSGG…STGV. Residues 450 to 461 show a composition bias toward acidic residues; it reads FDDDDGDDDDDF. The segment covering 506-516 has biased composition (basic and acidic residues); the sequence is DENKARAEKKV. Residues 517–527 are compositionally biased toward low complexity; that stretch reads SLPSSKNLKPS. 3 short sequence motifs (LFa) span residues 536 to 547, 571 to 582, and 616 to 628; these read LFSDEEDSEDLF, LFEDEDEEDNLF, and LFSSDEEDQWNIP. A phosphoserine mark is found at Ser538 and Ser543. Low complexity predominate over residues 546-566; sequence LFSSQSASKLKGAPLLPGKLP. Phosphoserine is present on residues Ser618 and Ser619. Residues 636–646 are compositionally biased toward basic and acidic residues; the sequence is SDSRSKGESRD. 3 consecutive short sequence motifs (LFa) follow at residues 663 to 673, 689 to 701, and 725 to 737; these read LFEEDEEDDLF, LFEDDVDSGGSLF, and LFSDEEEKEAQLG. Phosphoserine occurs at positions 727, 751, 786, and 801. Positions 740-767 are enriched in basic and acidic residues; sequence PVDKKVESAKESLKFGRTDVAESEKEGL. The LFa 11 motif lies at 802–816; sequence LFDEEEDKMEDQNTI. A compositionally biased stretch (basic and acidic residues) spans 822–833; that stretch reads EVGKGRDPDARP. 2 consecutive short sequence motifs (LFa) follow at residues 838–846 and 855–861; these read VFQDEELLF and DPDVDLF. A phosphoserine mark is found at Ser873 and Ser876. An LFa 14 motif is present at residues 877–887; sequence LFGDDEDDDLF. Disordered regions lie at residues 906–950 and 987–1205; these read DYSV…KEPS and FPSS…EDED. Residues 916-930 are compositionally biased toward basic and acidic residues; the sequence is KHPETIQGIKEKGIW. An interaction with phospholipids region spans residues 936–1340; it reads QDSSGLAPFK…DDPLNAFGGQ (405 aa). Basic residues predominate over residues 1027 to 1045; that stretch reads NKSRVKMRGKRRPQTRAAR. The required for interaction with F-actin-capping protein subunit alpha (CAPZA1 or CAPZA2 or CAPZA3) stretch occupies residues 1028–1046; that stretch reads KSRVKMRGKRRPQTRAARR. 2 positions are modified to phosphoserine: Ser1053 and Ser1086. Residues 1093–1109 are compositionally biased toward low complexity; it reads EALAAAAAPWEGGPVPG. Ser1113 is modified (phosphoserine). 6 consecutive short sequence motifs (LFa) follow at residues 1128 to 1135, 1170 to 1184, 1200 to 1208, 1233 to 1239, 1261 to 1269, and 1289 to 1298; these read LFDSGDIF, MFPALGEASSDDDLF, LLEDEDDLF, IFEDDIF, LFDDNIDIF, and IFDDDMDDIF. Phosphoserine occurs at positions 1178 and 1179. A disordered region spans residues 1301 to 1325; the sequence is GIQAKTAKPKSRSAQAAPEPRFEHK. Positions 1329-1337 match the LFa 21 motif; that stretch reads IFDDPLNAF.

It belongs to the FAM21 family. In terms of assembly, component of the WASH core complex also described as WASH regulatory complex (SHRC) composed of WASHC1, WASHC2, WASHC3, WASHC4 and WASHC5; in the complex interacts (via N-terminus) directly with WASHC1. The WASH core complex associates with the F-actin-capping protein dimer (formed by CAPZA1, CAPZA2 or CAPZA3 and CAPZB) in a transient or substoichiometric manner which was initially described as WASH complex. Interacts with VPS35; mediates the association with the retromer CSC complex. Interacts with FKBP15. Interacts with CCDC93, CCDC22, VPS35L; indicative for an association of the WASH core complex with the CCC and retriever complexes. Directly interacts with TBC1D23.

The protein resides in the early endosome membrane. It is found in the cell membrane. Functionally, acts as a component of the WASH core complex that functions as a nucleation-promoting factor (NPF) at the surface of endosomes, where it recruits and activates the Arp2/3 complex to induce actin polymerization, playing a key role in the fission of tubules that serve as transport intermediates during endosome sorting. Mediates the recruitment of the WASH core complex to endosome membranes via binding to phospholipids and VPS35 of the retromer CSC. Mediates the recruitment of the F-actin-capping protein dimer to the WASH core complex probably promoting localized F-actin polymerization needed for vesicle scission. Via its C-terminus binds various phospholipids, most strongly phosphatidylinositol 4-phosphate (PtdIns-(4)P), phosphatidylinositol 5-phosphate (PtdIns-(5)P) and phosphatidylinositol 3,5-bisphosphate (PtdIns-(3,5)P2). Involved in the endosome-to-plasma membrane trafficking and recycling of SNX27-retromer-dependent cargo proteins, such as GLUT1. Required for the association of DNAJC13, ENTR1, ANKRD50 with retromer CSC subunit VPS35. Required for the endosomal recruitment of CCC and retriever complexes subunits COMMD1 and CCDC93 as well as the retrievere complex subunit VPS35L. This Pongo abelii (Sumatran orangutan) protein is WASH complex subunit 2.